The following is a 126-amino-acid chain: Aspartate 1-decarboxylase (126 aa).

Ser25 serves as the catalytic Schiff-base intermediate with substrate; via pyruvic acid. Ser25 is subject to Pyruvic acid (Ser). Position 57 (Thr57) interacts with substrate. The active-site Proton donor is Tyr58. Residue 73–75 (GAA) participates in substrate binding.

The protein belongs to the PanD family. As to quaternary structure, heterooctamer of four alpha and four beta subunits. Pyruvate is required as a cofactor. Post-translationally, is synthesized initially as an inactive proenzyme, which is activated by self-cleavage at a specific serine bond to produce a beta-subunit with a hydroxyl group at its C-terminus and an alpha-subunit with a pyruvoyl group at its N-terminus.

It is found in the cytoplasm. It catalyses the reaction L-aspartate + H(+) = beta-alanine + CO2. The protein operates within cofactor biosynthesis; (R)-pantothenate biosynthesis; beta-alanine from L-aspartate: step 1/1. Functionally, catalyzes the pyruvoyl-dependent decarboxylation of aspartate to produce beta-alanine. The sequence is that of Aspartate 1-decarboxylase from Alkalilimnicola ehrlichii (strain ATCC BAA-1101 / DSM 17681 / MLHE-1).